Here is a 111-residue protein sequence, read N- to C-terminus: Large ribosomal subunit protein uL24 (111 aa).

It belongs to the universal ribosomal protein uL24 family. Part of the 50S ribosomal subunit.

One of two assembly initiator proteins, it binds directly to the 5'-end of the 23S rRNA, where it nucleates assembly of the 50S subunit. Functionally, one of the proteins that surrounds the polypeptide exit tunnel on the outside of the subunit. This Heliobacterium modesticaldum (strain ATCC 51547 / Ice1) protein is Large ribosomal subunit protein uL24.